A 345-amino-acid polypeptide reads, in one-letter code: Aurora kinase B (345 aa).

Positions 1–25 (MAQKENAYPWPYGSKTSQSGLNTLS) are disordered. Polar residues predominate over residues 14–25 (SKTSQSGLNTLS). At threonine 35 the chain carries Phosphothreonine. Residues 50-77 (TAAPGQKLAENKSQGSTASQGSQNKQPF) form a disordered region. Over residues 60-77 (NKSQGSTASQGSQNKQPF) the composition is skewed to polar residues. A Phosphoserine modification is found at serine 62. One can recognise a Protein kinase domain in the interval 82–332 (FEIGRPLGKG…LAEVAAHPWV (251 aa)). ATP-binding positions include 88–96 (LGKGKFGNV) and lysine 111. Aspartate 205 functions as the Proton acceptor in the catalytic mechanism. Position 220 is an N6-acetyllysine (lysine 220). At serine 232 the chain carries Phosphoserine. Threonine 237 carries the post-translational modification Phosphothreonine; by autocatalysis.

This sequence belongs to the protein kinase superfamily. Ser/Thr protein kinase family. Aurora subfamily. In terms of assembly, component of the chromosomal passenger complex (CPC) composed of at least BIRC5/survivin, CDCA8/borealin, INCENP, AURKB or AURKC; predominantly independent AURKB- and AURKC-containing complexes exist. Associates with RACGAP1 during M phase. Interacts with SPDYC; this interaction may be required for proper localization of active, Thr-237-phosphorylated AURKB form during prometaphase and metaphase. Interacts with p53/TP53. Interacts (via the middle kinase domain) with NOC2L (via the N- and C-terminus domains). Interacts with CDCA1. Interacts with EVI5. Interacts with JTB. Interacts with NDC80. Interacts with PSMA3. Interacts with RNF2/RING1B. Interacts with SEPTIN1. Interacts with SIRT2. Interacts with TACC1. Interacts with TTC28. Post-translationally, the phosphorylation of Thr-237 requires the binding to INCENP and occurs by means of an autophosphorylation mechanism. Thr-237 phosphorylation is indispensable for the AURKB kinase activity. In terms of processing, acetylated at Lys-220 by KAT5 at kinetochores, increasing AURKB activity and promoting accurate chromosome segregation in mitosis. Ubiquitinated by different BCR (BTB-CUL3-RBX1) E3 ubiquitin ligase complexes. Ubiquitinated by the BCR(KLHL9-KLHL13) E3 ubiquitin ligase complex, ubiquitination leads to removal from mitotic chromosomes and is required for cytokinesis. During anaphase, the BCR(KLHL21) E3 ubiquitin ligase complex recruits the CPC complex from chromosomes to the spindle midzone and mediates the ubiquitination of AURKB. Ubiquitination of AURKB by BCR(KLHL21) E3 ubiquitin ligase complex may not lead to its degradation by the proteasome. Deubiquitinated by USP35; inhibiting CDH1-mediated degradation of AURKB. Expressed in testis, intestine and spleen. All of them are tissues that contain a large number of proliferating cells. Expressed during S phase, in a cell-cycle-dependent fashion.

It localises to the nucleus. It is found in the chromosome. Its subcellular location is the centromere. The protein localises to the kinetochore. The protein resides in the cytoplasm. It localises to the cytoskeleton. It is found in the spindle. Its subcellular location is the midbody. It catalyses the reaction L-seryl-[protein] + ATP = O-phospho-L-seryl-[protein] + ADP + H(+). The catalysed reaction is L-threonyl-[protein] + ATP = O-phospho-L-threonyl-[protein] + ADP + H(+). With respect to regulation, activity is greatly increased when AURKB is within the CPC complex. In particular, AURKB-phosphorylated INCENP acts as an activator of AURKB. Positive feedback between HASPIN and AURKB contributes to CPC localization. Serine/threonine-protein kinase component of the chromosomal passenger complex (CPC), a complex that acts as a key regulator of mitosis. The CPC complex has essential functions at the centromere in ensuring correct chromosome alignment and segregation and is required for chromatin-induced microtubule stabilization and spindle assembly. Involved in the bipolar attachment of spindle microtubules to kinetochores and is a key regulator for the onset of cytokinesis during mitosis. Required for central/midzone spindle assembly and cleavage furrow formation. Key component of the cytokinesis checkpoint, a process required to delay abscission to prevent both premature resolution of intercellular chromosome bridges and accumulation of DNA damage: phosphorylates CHMP4C, leading to retain abscission-competent VPS4 (VPS4A and/or VPS4B) at the midbody ring until abscission checkpoint signaling is terminated at late cytokinesis. AURKB phosphorylates the CPC complex subunits BIRC5/survivin, CDCA8/borealin and INCENP. Phosphorylation of INCENP leads to increased AURKB activity. Other known AURKB substrates involved in centromeric functions and mitosis are CENPA, DES/desmin, GPAF, KIF2C, NSUN2, RACGAP1, SEPTIN1, VIM/vimentin, HASPIN, and histone H3. A positive feedback loop involving HASPIN and AURKB contributes to localization of CPC to centromeres. Phosphorylation of VIM controls vimentin filament segregation in cytokinetic process, whereas histone H3 is phosphorylated at 'Ser-10' and 'Ser-28' during mitosis (H3S10ph and H3S28ph, respectively). AURKB is also required for kinetochore localization of BUB1 and SGO1. Phosphorylation of p53/TP53 negatively regulates its transcriptional activity. Key regulator of active promoters in resting B- and T-lymphocytes: acts by mediating phosphorylation of H3S28ph at active promoters in resting B-cells, inhibiting RNF2/RING1B-mediated ubiquitination of histone H2A and enhancing binding and activity of the USP16 deubiquitinase at transcribed genes. Acts as an inhibitor of CGAS during mitosis: catalyzes phosphorylation of the N-terminus of CGAS during the G2-M transition, blocking CGAS liquid phase separation and activation, and thereby preventing CGAS-induced autoimmunity. Phosphorylates KRT5 during anaphase and telophase. Phosphorylates ATXN10 which promotes phosphorylation of ATXN10 by PLK1 and may play a role in the regulation of cytokinesis and stimulating the proteasomal degradation of ATXN10. The polypeptide is Aurora kinase B (Aurkb) (Mus musculus (Mouse)).